Reading from the N-terminus, the 70-residue chain is MALTKMKDLRQLSDQEVSDRIAAIKKELFDLRFKKATRQEVKPHQFKHLRHELAQLLTLENERRRSGGQG.

It belongs to the universal ribosomal protein uL29 family.

The polypeptide is Large ribosomal subunit protein uL29 (Thermosynechococcus vestitus (strain NIES-2133 / IAM M-273 / BP-1)).